A 122-amino-acid polypeptide reads, in one-letter code: Putative iron-sulfur cluster insertion protein ErpA (122 aa).

Iron-sulfur cluster contacts are provided by Cys50, Cys114, and Cys116.

This sequence belongs to the HesB/IscA family. In terms of assembly, homodimer. The cofactor is iron-sulfur cluster.

Its function is as follows. Required for insertion of 4Fe-4S clusters. The chain is Putative iron-sulfur cluster insertion protein ErpA from Burkholderia mallei (strain NCTC 10247).